The chain runs to 332 residues: RING-H2 finger protein ATL81 (332 aa).

A signal peptide spans 1–19; sequence MYDLTFLLISLFPIDITLP. A helical membrane pass occupies residues 76–96; it reads IVLTGSLLFIIFTGFFSFFFC. The segment at 154–196 adopts an RING-type; atypical zinc-finger fold; the sequence is CSICLTEFMDDDTIRLISTCNHSFHTICIDLWFEGHKTCPVCR.

This sequence belongs to the RING-type zinc finger family. ATL subfamily.

The protein resides in the membrane. The enzyme catalyses S-ubiquitinyl-[E2 ubiquitin-conjugating enzyme]-L-cysteine + [acceptor protein]-L-lysine = [E2 ubiquitin-conjugating enzyme]-L-cysteine + N(6)-ubiquitinyl-[acceptor protein]-L-lysine.. The protein operates within protein modification; protein ubiquitination. In Arabidopsis thaliana (Mouse-ear cress), this protein is RING-H2 finger protein ATL81 (ATL81).